An 88-amino-acid chain; its full sequence is Cell division topological specificity factor (88 aa).

Belongs to the MinE family.

Its function is as follows. Prevents the cell division inhibition by proteins MinC and MinD at internal division sites while permitting inhibition at polar sites. This ensures cell division at the proper site by restricting the formation of a division septum at the midpoint of the long axis of the cell. In Herminiimonas arsenicoxydans, this protein is Cell division topological specificity factor.